The following is a 532-amino-acid chain: Protoporphyrinogen oxidase (532 aa).

FAD is bound by residues 9-14 (GSGISG), Ile-289, and 511-513 (VGI).

The protein belongs to the protoporphyrinogen/coproporphyrinogen oxidase family. Protoporphyrinogen oxidase subfamily. Requires FAD as cofactor.

Its subcellular location is the mitochondrion. The enzyme catalyses protoporphyrinogen IX + 3 O2 = protoporphyrin IX + 3 H2O2. Its pathway is porphyrin-containing compound metabolism; protoporphyrin-IX biosynthesis; protoporphyrin-IX from protoporphyrinogen-IX: step 1/1. Catalyzes the 6-electron oxidation of protoporphyrinogen-IX to form protoporphyrin-IX. In Dictyostelium discoideum (Social amoeba), this protein is Protoporphyrinogen oxidase (ppox).